The sequence spans 231 residues: MAHPVHVGLKEATSPFMEELIAFHDHTLMIIFLISSLVLYIISMMLTTKLTHTSTMNAQEIEIIWTILPAIILIMIALPSLRILYMTDEFNKPYLTLKAIGHQWYWSYEYSDYVDLAFDSYIMPTYFLEPGEFRLLEVDNRTTLPMEADIRMLISSQDVLHSWAVPSXGVKADAIPGRLNQAMLASMRPGLFYGQCSEICGSNHCFMPIVLEFSYFXDFETWASYLYIVSL.

Over 1–14 the chain is Mitochondrial intermembrane; that stretch reads MAHPVHVGLKEATS. A helical membrane pass occupies residues 15–45; sequence PFMEELIAFHDHTLMIIFLISSLVLYIISMM. The Mitochondrial matrix portion of the chain corresponds to 46-59; that stretch reads LTTKLTHTSTMNAQ. Residues 60 to 87 traverse the membrane as a helical segment; that stretch reads EIEIIWTILPAIILIMIALPSLRILYMT. The Mitochondrial intermembrane segment spans residues 88–231; sequence DEFNKPYLTL…WASYLYIVSL (144 aa). Residues His161, Cys196, Glu198, Cys200, His204, and Met207 each coordinate Cu cation. Position 198 (Glu198) interacts with Mg(2+).

The protein belongs to the cytochrome c oxidase subunit 2 family. In terms of assembly, component of the cytochrome c oxidase (complex IV, CIV), a multisubunit enzyme composed of 14 subunits. The complex is composed of a catalytic core of 3 subunits MT-CO1, MT-CO2 and MT-CO3, encoded in the mitochondrial DNA, and 11 supernumerary subunits COX4I, COX5A, COX5B, COX6A, COX6B, COX6C, COX7A, COX7B, COX7C, COX8 and NDUFA4, which are encoded in the nuclear genome. The complex exists as a monomer or a dimer and forms supercomplexes (SCs) in the inner mitochondrial membrane with NADH-ubiquinone oxidoreductase (complex I, CI) and ubiquinol-cytochrome c oxidoreductase (cytochrome b-c1 complex, complex III, CIII), resulting in different assemblies (supercomplex SCI(1)III(2)IV(1) and megacomplex MCI(2)III(2)IV(2)). Found in a complex with TMEM177, COA6, COX18, COX20, SCO1 and SCO2. Interacts with TMEM177 in a COX20-dependent manner. Interacts with COX20. Interacts with COX16. Cu cation is required as a cofactor.

The protein resides in the mitochondrion inner membrane. The catalysed reaction is 4 Fe(II)-[cytochrome c] + O2 + 8 H(+)(in) = 4 Fe(III)-[cytochrome c] + 2 H2O + 4 H(+)(out). Functionally, component of the cytochrome c oxidase, the last enzyme in the mitochondrial electron transport chain which drives oxidative phosphorylation. The respiratory chain contains 3 multisubunit complexes succinate dehydrogenase (complex II, CII), ubiquinol-cytochrome c oxidoreductase (cytochrome b-c1 complex, complex III, CIII) and cytochrome c oxidase (complex IV, CIV), that cooperate to transfer electrons derived from NADH and succinate to molecular oxygen, creating an electrochemical gradient over the inner membrane that drives transmembrane transport and the ATP synthase. Cytochrome c oxidase is the component of the respiratory chain that catalyzes the reduction of oxygen to water. Electrons originating from reduced cytochrome c in the intermembrane space (IMS) are transferred via the dinuclear copper A center (CU(A)) of subunit 2 and heme A of subunit 1 to the active site in subunit 1, a binuclear center (BNC) formed by heme A3 and copper B (CU(B)). The BNC reduces molecular oxygen to 2 water molecules using 4 electrons from cytochrome c in the IMS and 4 protons from the mitochondrial matrix. This chain is Cytochrome c oxidase subunit 2 (MT-CO2), found in Brachyteles hypoxanthus (Northern muriqui).